A 264-amino-acid chain; its full sequence is S-adenosylmethionine decarboxylase proenzyme (264 aa).

Ser-113 serves as the catalytic Schiff-base intermediate with substrate; via pyruvic acid. The residue at position 113 (Ser-113) is a Pyruvic acid (Ser); by autocatalysis. The Proton acceptor; for processing activity role is filled by His-118. Residue Cys-141 is the Proton donor; for catalytic activity of the active site.

It belongs to the prokaryotic AdoMetDC family. Type 2 subfamily. Heterooctamer of four alpha and four beta chains arranged as a tetramer of alpha/beta heterodimers. Pyruvate serves as cofactor. Post-translationally, is synthesized initially as an inactive proenzyme. Formation of the active enzyme involves a self-maturation process in which the active site pyruvoyl group is generated from an internal serine residue via an autocatalytic post-translational modification. Two non-identical subunits are generated from the proenzyme in this reaction, and the pyruvate is formed at the N-terminus of the alpha chain, which is derived from the carboxyl end of the proenzyme. The post-translation cleavage follows an unusual pathway, termed non-hydrolytic serinolysis, in which the side chain hydroxyl group of the serine supplies its oxygen atom to form the C-terminus of the beta chain, while the remainder of the serine residue undergoes an oxidative deamination to produce ammonia and the pyruvoyl group blocking the N-terminus of the alpha chain.

The enzyme catalyses S-adenosyl-L-methionine + H(+) = S-adenosyl 3-(methylsulfanyl)propylamine + CO2. It functions in the pathway amine and polyamine biosynthesis; S-adenosylmethioninamine biosynthesis; S-adenosylmethioninamine from S-adenosyl-L-methionine: step 1/1. In terms of biological role, catalyzes the decarboxylation of S-adenosylmethionine to S-adenosylmethioninamine (dcAdoMet), the propylamine donor required for the synthesis of the polyamines spermine and spermidine from the diamine putrescine. The sequence is that of S-adenosylmethionine decarboxylase proenzyme from Pseudomonas aeruginosa (strain UCBPP-PA14).